Consider the following 714-residue polypeptide: Fumarate reductase flavoprotein subunit (714 aa).

FAD is bound by residues 13-16 (GGLA), 42-44 (SHS), and 49-50 (GG). Residue His43 is modified to Tele-8alpha-FAD histidine. Active-site residues include His257 and Arg273. FAD contacts are provided by residues Glu420 and 436 to 437 (SV).

Belongs to the FAD-dependent oxidoreductase 2 family. FRD/SDH subfamily. As to quaternary structure, part of an enzyme complex containing three subunits: a flavoprotein (frdA), an iron-sulfur protein (frdB), and diheme cytochrome b (frdC). FAD is required as a cofactor.

Its subcellular location is the cell inner membrane. It carries out the reaction a quinone + succinate = fumarate + a quinol. Its function is as follows. The fumarate reductase enzyme complex is required for fumarate respiration. The polypeptide is Fumarate reductase flavoprotein subunit (frdA) (Helicobacter pylori (strain ATCC 700392 / 26695) (Campylobacter pylori)).